The following is a 258-amino-acid chain: UPF0246 protein Sfri_2896 (258 aa).

The protein belongs to the UPF0246 family.

The polypeptide is UPF0246 protein Sfri_2896 (Shewanella frigidimarina (strain NCIMB 400)).